Consider the following 546-residue polypeptide: Metal transporter Nramp6.2 (546 aa).

8 helical membrane passes run 50–70 (FLPYVGPGFLVSLAYLDPGNL), 83–103 (ELLWVILIGLIFALIIQSLAA), 128–150 (SLWLLAEVAVIAADIPEVIGTAF), 154–176 (ILFHIPVWAGVLMTGLSTLLLLG), 187–207 (LLISALVFTMAACFFGELSYV), 233–253 (IALLGALVMPHNLFLHSALVL), 270–290 (YFLIESGFALFVAFLINVSII), and 333–353 (IYAIALLASGQSSTITGTYAG). An N-linked (GlcNAc...) asparagine glycan is attached at Asn-371. The next 4 helical transmembrane spans lie at 374 to 394 (TRCIAILPSLFVSIIGGSSGA), 397 to 417 (LIIIASMILSFELPFALIPLL), 433 to 453 (IYIIVISWTLGFMIIGINVYY), and 473 to 493 (VIIGIIVFPLMAIYILAIIYL).

It belongs to the NRAMP (TC 2.A.55) family.

The protein localises to the membrane. In terms of biological role, probable divalent metal transporter. The protein is Metal transporter Nramp6.2 of Populus trichocarpa (Western balsam poplar).